The chain runs to 666 residues: DNA mismatch repair protein MutL (666 aa).

The protein belongs to the DNA mismatch repair MutL/HexB family.

Functionally, this protein is involved in the repair of mismatches in DNA. It is required for dam-dependent methyl-directed DNA mismatch repair. May act as a 'molecular matchmaker', a protein that promotes the formation of a stable complex between two or more DNA-binding proteins in an ATP-dependent manner without itself being part of a final effector complex. This Clostridium botulinum (strain 657 / Type Ba4) protein is DNA mismatch repair protein MutL.